A 248-amino-acid chain; its full sequence is DNA repair protein RecO (248 aa).

It belongs to the RecO family.

Functionally, involved in DNA repair and RecF pathway recombination. The protein is DNA repair protein RecO of Bacillus cytotoxicus (strain DSM 22905 / CIP 110041 / 391-98 / NVH 391-98).